We begin with the raw amino-acid sequence, 382 residues long: Protein phosphatase 1A (382 aa).

The N-myristoyl glycine moiety is linked to residue G2. Residues 23–291 (RYGLSSMQGW…DNMSVILICF (269 aa)) enclose the PPM-type phosphatase domain. Mn(2+)-binding residues include D60, G61, D239, and D282. Phosphoserine is present on residues S375 and S377.

Belongs to the PP2C family. As to quaternary structure, monomer. Interacts with SMAD2; the interaction dephosphorylates SMAD2 in its C-terminal SXS motif resulting in disruption of the SMAD2/SMAD4 complex, SMAD2 nuclear export and termination of the TGF-beta-mediated signaling. Interacts with SMAD2; the interaction dephosphorylates SMAD2 in its C-terminal SXS motif resulting in disruption of the SMAD2/SMAD4 complex, SMAD2 nuclear export and termination of the TGF-beta-mediated signaling. Interacts with the phosphorylated form of IKBKB/IKKB. Mg(2+) serves as cofactor. Requires Mn(2+) as cofactor. In terms of processing, N-myristoylation is essential for the recognition of its substrates for dephosphorylation.

Its subcellular location is the nucleus. It is found in the cytoplasm. The protein localises to the cytosol. It localises to the membrane. It catalyses the reaction O-phospho-L-seryl-[protein] + H2O = L-seryl-[protein] + phosphate. The catalysed reaction is O-phospho-L-threonyl-[protein] + H2O = L-threonyl-[protein] + phosphate. In terms of biological role, enzyme with a broad specificity. Negatively regulates TGF-beta signaling through dephosphorylating SMAD2 and SMAD3, resulting in their dissociation from SMAD4, nuclear export of the SMADs and termination of the TGF-beta-mediated signaling. Dephosphorylates PRKAA1 and PRKAA2. Plays an important role in the termination of TNF-alpha-mediated NF-kappa-B activation through dephosphorylating and inactivating IKBKB/IKKB. This Oryctolagus cuniculus (Rabbit) protein is Protein phosphatase 1A (PPM1A).